The following is a 179-amino-acid chain: NAD(P)H-quinone oxidoreductase subunit I, chloroplastic (179 aa).

4Fe-4S ferredoxin-type domains follow at residues 55–84 (GRIHFEFDKCIACEVCVRVCPIDLPVVDWR) and 95–124 (LNYSIDFGVCIFCGNCVEYCPTNCLSMTEE). The [4Fe-4S] cluster site is built by cysteine 64, cysteine 67, cysteine 70, cysteine 74, cysteine 104, cysteine 107, cysteine 110, and cysteine 114.

It belongs to the complex I 23 kDa subunit family. NDH is composed of at least 16 different subunits, 5 of which are encoded in the nucleus. [4Fe-4S] cluster serves as cofactor.

Its subcellular location is the plastid. It is found in the chloroplast thylakoid membrane. It carries out the reaction a plastoquinone + NADH + (n+1) H(+)(in) = a plastoquinol + NAD(+) + n H(+)(out). The enzyme catalyses a plastoquinone + NADPH + (n+1) H(+)(in) = a plastoquinol + NADP(+) + n H(+)(out). In terms of biological role, NDH shuttles electrons from NAD(P)H:plastoquinone, via FMN and iron-sulfur (Fe-S) centers, to quinones in the photosynthetic chain and possibly in a chloroplast respiratory chain. The immediate electron acceptor for the enzyme in this species is believed to be plastoquinone. Couples the redox reaction to proton translocation, and thus conserves the redox energy in a proton gradient. The protein is NAD(P)H-quinone oxidoreductase subunit I, chloroplastic of Acorus calamus (Sweet flag).